Consider the following 105-residue polypeptide: ATP-dependent Clp protease adapter protein ClpS (105 aa).

The protein belongs to the ClpS family. In terms of assembly, binds to the N-terminal domain of the chaperone ClpA.

Its function is as follows. Involved in the modulation of the specificity of the ClpAP-mediated ATP-dependent protein degradation. This is ATP-dependent Clp protease adapter protein ClpS from Klebsiella pneumoniae (strain 342).